The sequence spans 144 residues: Maximins 11/H1 (144 aa).

Residues 1–18 (MNFKYIVAVSFLIASAYA) form the signal peptide. Positions 19 to 43 (RSEENDEQSLSQRDVLEEESLREIR) are excised as a propeptide. Asn70 carries the post-translational modification Asparagine amide. Positions 74-123 (TAEDHEVMKRLEAVMRDLDSLDYPEEASERETRGFNQEEIANLFTKKEKR) are excised as a propeptide. Leu143 carries the leucine amide modification.

It belongs to the bombinin family. Expressed by the skin glands.

The protein resides in the secreted. Functionally, maximin-11 shows antimicrobial activity against bacteria and against the fungus C.albicans. It has little hemolytic activity. Its function is as follows. Maximin-H1 shows antibacterial activity against both Gram-positive and Gram-negative bacteria. It also shows antimicrobial activity against the fungus C.albicans. Shows strong hemolytic activity. This chain is Maximins 11/H1, found in Bombina maxima (Giant fire-bellied toad).